We begin with the raw amino-acid sequence, 442 residues long: Tubulin beta chain (442 aa).

Gln11, Glu67, Ser136, Gly140, Thr141, Gly142, and Asn202 together coordinate GTP. A Mg(2+)-binding site is contributed by Glu67.

It belongs to the tubulin family. Dimer of alpha and beta chains. A typical microtubule is a hollow water-filled tube with an outer diameter of 25 nm and an inner diameter of 15 nM. Alpha-beta heterodimers associate head-to-tail to form protofilaments running lengthwise along the microtubule wall with the beta-tubulin subunit facing the microtubule plus end conferring a structural polarity. Microtubules usually have 13 protofilaments but different protofilament numbers can be found in some organisms and specialized cells. Requires Mg(2+) as cofactor.

It is found in the cytoplasm. Its subcellular location is the cytoskeleton. Tubulin is the major constituent of microtubules, a cylinder consisting of laterally associated linear protofilaments composed of alpha- and beta-tubulin heterodimers. Microtubules grow by the addition of GTP-tubulin dimers to the microtubule end, where a stabilizing cap forms. Below the cap, tubulin dimers are in GDP-bound state, owing to GTPase activity of alpha-tubulin. In Euglena gracilis, this protein is Tubulin beta chain (TUBB).